The sequence spans 397 residues: Small ribosomal subunit protein mS29 (397 aa).

Residues 1–17 constitute a mitochondrion transit peptide; it reads MLKGMTRLVSRVHKLDP. K174 and K206 each carry N6-acetyllysine.

The protein belongs to the mitochondrion-specific ribosomal protein mS29 family. In terms of assembly, component of the mitochondrial ribosome small subunit (28S) which comprises a 12S rRNA and about 30 distinct proteins. Interacts with DELE1. Interacts with NOA1.

It localises to the mitochondrion. The enzyme catalyses GTP + H2O = GDP + phosphate + H(+). Its function is as follows. As a component of the mitochondrial small ribosomal subunit, it plays a role in the translation of mitochondrial mRNAs. Involved in mediating interferon-gamma-induced cell death. Displays GTPase activity in vitro. This is Small ribosomal subunit protein mS29 from Bos taurus (Bovine).